Here is a 430-residue protein sequence, read N- to C-terminus: Asparagine--tRNA ligase (430 aa).

It belongs to the class-II aminoacyl-tRNA synthetase family. Homodimer.

It localises to the cytoplasm. It carries out the reaction tRNA(Asn) + L-asparagine + ATP = L-asparaginyl-tRNA(Asn) + AMP + diphosphate + H(+). The chain is Asparagine--tRNA ligase from Shouchella clausii (strain KSM-K16) (Alkalihalobacillus clausii).